A 115-amino-acid chain; its full sequence is Aspartate 1-decarboxylase (115 aa).

Serine 25 functions as the Schiff-base intermediate with substrate; via pyruvic acid in the catalytic mechanism. Pyruvic acid (Ser) is present on serine 25. Threonine 57 is a substrate binding site. Tyrosine 58 functions as the Proton donor in the catalytic mechanism. 73–75 (GPA) provides a ligand contact to substrate.

It belongs to the PanD family. Heterooctamer of four alpha and four beta subunits. Pyruvate is required as a cofactor. In terms of processing, is synthesized initially as an inactive proenzyme, which is activated by self-cleavage at a specific serine bond to produce a beta-subunit with a hydroxyl group at its C-terminus and an alpha-subunit with a pyruvoyl group at its N-terminus.

It localises to the cytoplasm. The enzyme catalyses L-aspartate + H(+) = beta-alanine + CO2. Its pathway is cofactor biosynthesis; (R)-pantothenate biosynthesis; beta-alanine from L-aspartate: step 1/1. Its function is as follows. Catalyzes the pyruvoyl-dependent decarboxylation of aspartate to produce beta-alanine. The chain is Aspartate 1-decarboxylase from Cytophaga hutchinsonii (strain ATCC 33406 / DSM 1761 / CIP 103989 / NBRC 15051 / NCIMB 9469 / D465).